The sequence spans 347 residues: Anthranilate phosphoribosyltransferase (347 aa).

5-phospho-alpha-D-ribose 1-diphosphate contacts are provided by residues Gly88, 91-92 (GD), Thr96, 98-101 (NIST), 116-124 (KHGGRSVSS), and Ser128. Position 88 (Gly88) interacts with anthranilate. Ser100 is a Mg(2+) binding site. Residue Arg174 coordinates anthranilate. Mg(2+)-binding residues include Asp233 and Glu234.

This sequence belongs to the anthranilate phosphoribosyltransferase family. Homodimer. Mg(2+) is required as a cofactor.

It catalyses the reaction N-(5-phospho-beta-D-ribosyl)anthranilate + diphosphate = 5-phospho-alpha-D-ribose 1-diphosphate + anthranilate. It participates in amino-acid biosynthesis; L-tryptophan biosynthesis; L-tryptophan from chorismate: step 2/5. Catalyzes the transfer of the phosphoribosyl group of 5-phosphorylribose-1-pyrophosphate (PRPP) to anthranilate to yield N-(5'-phosphoribosyl)-anthranilate (PRA). The chain is Anthranilate phosphoribosyltransferase from Polaromonas sp. (strain JS666 / ATCC BAA-500).